A 186-amino-acid chain; its full sequence is Archaemetzincin (186 aa).

His136 serves as a coordination point for Zn(2+). Glu137 functions as the Proton acceptor in the catalytic mechanism. Zn(2+) is bound by residues His140, His146, Cys147, Cys152, Cys171, and Cys174.

This sequence belongs to the peptidase M54 family. As to quaternary structure, monomer. Zn(2+) is required as a cofactor.

In terms of biological role, probable zinc metalloprotease whose natural substrate is unknown. This Thermococcus kodakarensis (strain ATCC BAA-918 / JCM 12380 / KOD1) (Pyrococcus kodakaraensis (strain KOD1)) protein is Archaemetzincin.